Consider the following 570-residue polypeptide: MFS-type transporter ptmT (570 aa).

Residues 1–11 (MPDSGNIQLDT) are compositionally biased toward polar residues. The tract at residues 1 to 34 (MPDSGNIQLDTLQHKDHSQETTSHYEGGSQLPEQ) is disordered. 14 helical membrane-spanning segments follow: residues 50 to 70 (GLIR…CVGL), 94 to 114 (WYVS…GKIY), 121 to 141 (WTYL…AITP), 151 to 171 (AISG…LSNI), 182 to 202 (AFIG…GGVF), 210 to 230 (WCFY…FLFM), 247 to 267 (GLDW…LLAL), 278 to 298 (NVRI…WLLI), 323 to 343 (IYTI…PIWF), 356 to 376 (IMNL…SVLI), 379 to 399 (VGYM…GAGL), 413 to 433 (IGYQ…PLLV), 445 to 465 (VATA…SAIA), and 517 to 537 (VTHT…GAFI). Asn-541 carries N-linked (GlcNAc...) asparagine glycosylation. Residues 550–570 (PEPLVPGGSHSGAERDSKNGT) are disordered. The span at 561 to 570 (GAERDSKNGT) shows a compositional bias: basic and acidic residues.

Belongs to the major facilitator superfamily. TCR/Tet family.

The protein resides in the cell membrane. MFS-type transporter; part of the gene cluster that mediates the biosynthesis of the indole diterpenes penitrems. May be involved in the efflux of penitrems. The sequence is that of MFS-type transporter ptmT from Penicillium ochrochloron.